A 150-amino-acid chain; its full sequence is Flagellar assembly factor FliW (150 aa).

This sequence belongs to the FliW family. As to quaternary structure, interacts with translational regulator CsrA and flagellin(s).

The protein resides in the cytoplasm. In terms of biological role, acts as an anti-CsrA protein, binds CsrA and prevents it from repressing translation of its target genes, one of which is flagellin. Binds to flagellin and participates in the assembly of the flagellum. The sequence is that of Flagellar assembly factor FliW from Leptospira interrogans serogroup Icterohaemorrhagiae serovar Lai (strain 56601).